The chain runs to 130 residues: Cystatin (130 aa).

The signal sequence occupies residues 1 to 19; that stretch reads MEWKIVVPLFAVAFTVANA. Positions 67–71 match the Secondary area of contact motif; that stretch reads QVVSG. Intrachain disulfides connect C85-C94 and C108-C128.

It belongs to the cystatin family.

It is found in the secreted. Cysteine proteinase inhibitor. This chain is Cystatin, found in Oncorhynchus mykiss (Rainbow trout).